Consider the following 137-residue polypeptide: Small ribosomal subunit protein eS6 (137 aa).

Residues 114-127 (LPVEEAPAEDAPES) are compositionally biased toward acidic residues. The segment at 114–137 (LPVEEAPAEDAPESAEEKSEDKKE) is disordered. The segment covering 128–137 (AEEKSEDKKE) has biased composition (basic and acidic residues).

It belongs to the eukaryotic ribosomal protein eS6 family.

In Nitrosopumilus maritimus (strain SCM1), this protein is Small ribosomal subunit protein eS6.